The chain runs to 46 residues: Esculentin-1SEa (46 aa).

Cysteines 40 and 46 form a disulfide.

In terms of tissue distribution, expressed by the skin glands.

Its subcellular location is the secreted. Mast cell degranulating peptide. Causes histamine release from rat peritoneal mast cells in vitro. Has antibacterial activity against the Gram-negative bacterium E.coli K12 and Gram-positive bacterium M.luteus NCT C2665. The polypeptide is Esculentin-1SEa (Lithobates sevosus (Dusky gopher frog)).